The sequence spans 682 residues: Methionine--tRNA ligase (682 aa).

The 'HIGH' region signature appears at 12–22 (PYANGAIHLGH). Positions 143, 146, 156, and 159 each coordinate Zn(2+). The 'KMSKS' region motif lies at 328 to 332 (KMSKS). Lysine 331 serves as a coordination point for ATP. Residues 580 to 682 (DFAKLDLRVA…EGIRPGMQVK (103 aa)) enclose the tRNA-binding domain.

Belongs to the class-I aminoacyl-tRNA synthetase family. MetG type 1 subfamily. Homodimer. Zn(2+) serves as cofactor.

The protein localises to the cytoplasm. The catalysed reaction is tRNA(Met) + L-methionine + ATP = L-methionyl-tRNA(Met) + AMP + diphosphate. Functionally, is required not only for elongation of protein synthesis but also for the initiation of all mRNA translation through initiator tRNA(fMet) aminoacylation. This chain is Methionine--tRNA ligase, found in Actinobacillus pleuropneumoniae serotype 7 (strain AP76).